Consider the following 918-residue polypeptide: Nitrate reductase [NADH] (918 aa).

The disordered stretch occupies residues Lys-25–Ser-44. A Mo-molybdopterin-binding site is contributed by Cys-195. The Cytochrome b5 heme-binding domain maps to Ser-543–Ile-618. His-578 and His-601 together coordinate heme. The FAD-binding FR-type domain occupies Asn-661 to Thr-774. FAD-binding positions include Arg-714–Thr-717, Val-731–Tyr-735, Phe-736, Phe-743, Ile-748–Ser-750, and Thr-801.

It belongs to the nitrate reductase family. As to quaternary structure, homodimer. FAD serves as cofactor. The cofactor is heme. Requires Mo-molybdopterin as cofactor.

It catalyses the reaction nitrite + NAD(+) + H2O = nitrate + NADH + H(+). Functionally, nitrate reductase is a key enzyme involved in the first step of nitrate assimilation in plants, fungi and bacteria. The polypeptide is Nitrate reductase [NADH] (Cucurbita maxima (Pumpkin)).